A 303-amino-acid chain; its full sequence is UDP-N-acetylenolpyruvoylglucosamine reductase (303 aa).

The 168-residue stretch at 28 to 195 folds into the FAD-binding PCMH-type domain; it reads KTGGPAQYLA…ISATFGLEPG (168 aa). Arg174 is an active-site residue. The active-site Proton donor is Ser224. Glu294 is an active-site residue.

Belongs to the MurB family. The cofactor is FAD.

Its subcellular location is the cytoplasm. The catalysed reaction is UDP-N-acetyl-alpha-D-muramate + NADP(+) = UDP-N-acetyl-3-O-(1-carboxyvinyl)-alpha-D-glucosamine + NADPH + H(+). The protein operates within cell wall biogenesis; peptidoglycan biosynthesis. Functionally, cell wall formation. The sequence is that of UDP-N-acetylenolpyruvoylglucosamine reductase from Lactobacillus gasseri (strain ATCC 33323 / DSM 20243 / BCRC 14619 / CIP 102991 / JCM 1131 / KCTC 3163 / NCIMB 11718 / NCTC 13722 / AM63).